Reading from the N-terminus, the 269-residue chain is MPTVRDLQAMAGEEPITMLTAYDAVTASIVDDTGVDVILVGDSMGNAVLGHDDTLPVTLDEMASRVGAVARGADDALVVADMPFLSFGAHESESIQNCGRMLKEEGANAIKLESGPHTVELTERLTELGIPTMAHLGLTPQSVNQTGYTRQATGREEAEEILDLAREHEAAGAFALVLEHIPANLAAKVTEAVDIPTIGIGAGGDCDGQVLVFTDVVGLSESSPPFAEQFGDVRGEVADAVDEYIDAVESGEFPRESHSHTEDELDDLY.

D42 and D81 together coordinate Mg(2+). Residues 42–43, D81, and K111 each bind 3-methyl-2-oxobutanoate; that span reads DS. Position 113 (E113) interacts with Mg(2+). The active-site Proton acceptor is the E179. The tract at residues 250 to 269 is disordered; sequence SGEFPRESHSHTEDELDDLY. The span at 252–262 shows a compositional bias: basic and acidic residues; the sequence is EFPRESHSHTE.

The protein belongs to the PanB family. In terms of assembly, homodecamer; pentamer of dimers. Mg(2+) serves as cofactor.

Its subcellular location is the cytoplasm. The enzyme catalyses 3-methyl-2-oxobutanoate + (6R)-5,10-methylene-5,6,7,8-tetrahydrofolate + H2O = 2-dehydropantoate + (6S)-5,6,7,8-tetrahydrofolate. It functions in the pathway cofactor biosynthesis; coenzyme A biosynthesis. Catalyzes the reversible reaction in which hydroxymethyl group from 5,10-methylenetetrahydrofolate is transferred onto alpha-ketoisovalerate to form ketopantoate. The sequence is that of 3-methyl-2-oxobutanoate hydroxymethyltransferase from Haloarcula marismortui (strain ATCC 43049 / DSM 3752 / JCM 8966 / VKM B-1809) (Halobacterium marismortui).